A 225-amino-acid chain; its full sequence is Cell division protein SepF (225 aa).

The interval 22–116 (EYLDEPEPAR…TRGALAVDTR (95 aa)) is disordered. 2 stretches are compositionally biased toward basic and acidic residues: residues 28-54 (EPAR…RDFA) and 77-86 (RYDGPRHSSR).

The protein belongs to the SepF family. As to quaternary structure, homodimer. Interacts with FtsZ.

Its subcellular location is the cytoplasm. Its function is as follows. Cell division protein that is part of the divisome complex and is recruited early to the Z-ring. Probably stimulates Z-ring formation, perhaps through the cross-linking of FtsZ protofilaments. Its function overlaps with FtsA. The protein is Cell division protein SepF of Rhodococcus jostii (strain RHA1).